The primary structure comprises 99 residues: Small ribosomal subunit protein uS19 (99 aa).

The segment at 76 to 99 (PTRSFRGHAGGGKAEKGGSAPRKK) is disordered.

It belongs to the universal ribosomal protein uS19 family.

Functionally, protein S19 forms a complex with S13 that binds strongly to the 16S ribosomal RNA. This Pelodictyon phaeoclathratiforme (strain DSM 5477 / BU-1) protein is Small ribosomal subunit protein uS19.